Reading from the N-terminus, the 353-residue chain is Photosystem II D2 protein (353 aa).

Residue threonine 2 is modified to N-acetylthreonine. Threonine 2 bears the Phosphothreonine mark. A helical membrane pass occupies residues 41–61 (CAYFALGGWFTGTTFVTSWYT). Position 118 (histidine 118) interacts with chlorophyll a. Residues 125-141 (GFMLRQFELARSVQLRP) traverse the membrane as a helical segment. The pheophytin a site is built by glutamine 130 and asparagine 143. The chain crosses the membrane as a helical span at residues 153-166 (VFVSVFLIYPLGQS). Histidine 198 serves as a coordination point for chlorophyll a. A helical transmembrane segment spans residues 208–228 (AALLCAIHGATVENTLFEDGD). 2 residues coordinate a plastoquinone: histidine 215 and phenylalanine 262. Histidine 215 is a binding site for Fe cation. Position 269 (histidine 269) interacts with Fe cation. A helical membrane pass occupies residues 279 to 295 (GLWMSALGVVGLALNLR).

Belongs to the reaction center PufL/M/PsbA/D family. PSII is composed of 1 copy each of membrane proteins PsbA, PsbB, PsbC, PsbD, PsbE, PsbF, PsbH, PsbI, PsbJ, PsbK, PsbL, PsbM, PsbT, PsbX, PsbY, PsbZ, Psb30/Ycf12, at least 3 peripheral proteins of the oxygen-evolving complex and a large number of cofactors. It forms dimeric complexes. The cofactor is The D1/D2 heterodimer binds P680, chlorophylls that are the primary electron donor of PSII, and subsequent electron acceptors. It shares a non-heme iron and each subunit binds pheophytin, quinone, additional chlorophylls, carotenoids and lipids. There is also a Cl(-1) ion associated with D1 and D2, which is required for oxygen evolution. The PSII complex binds additional chlorophylls, carotenoids and specific lipids..

The protein localises to the plastid. It localises to the chloroplast thylakoid membrane. It catalyses the reaction 2 a plastoquinone + 4 hnu + 2 H2O = 2 a plastoquinol + O2. In terms of biological role, photosystem II (PSII) is a light-driven water:plastoquinone oxidoreductase that uses light energy to abstract electrons from H(2)O, generating O(2) and a proton gradient subsequently used for ATP formation. It consists of a core antenna complex that captures photons, and an electron transfer chain that converts photonic excitation into a charge separation. The D1/D2 (PsbA/PsbD) reaction center heterodimer binds P680, the primary electron donor of PSII as well as several subsequent electron acceptors. D2 is needed for assembly of a stable PSII complex. This is Photosystem II D2 protein from Pelargonium hortorum (Common geranium).